Reading from the N-terminus, the 405-residue chain is Probable tRNA sulfurtransferase (405 aa).

One can recognise a THUMP domain in the interval 60–165; it reads EPVNDRLKVV…QDGAYISNQL (106 aa). ATP is bound by residues 183 to 184, 208 to 209, Arg265, Gly287, and Gln296; these read ML and HF.

Belongs to the ThiI family.

It is found in the cytoplasm. It catalyses the reaction [ThiI sulfur-carrier protein]-S-sulfanyl-L-cysteine + a uridine in tRNA + 2 reduced [2Fe-2S]-[ferredoxin] + ATP + H(+) = [ThiI sulfur-carrier protein]-L-cysteine + a 4-thiouridine in tRNA + 2 oxidized [2Fe-2S]-[ferredoxin] + AMP + diphosphate. The enzyme catalyses [ThiS sulfur-carrier protein]-C-terminal Gly-Gly-AMP + S-sulfanyl-L-cysteinyl-[cysteine desulfurase] + AH2 = [ThiS sulfur-carrier protein]-C-terminal-Gly-aminoethanethioate + L-cysteinyl-[cysteine desulfurase] + A + AMP + 2 H(+). It participates in cofactor biosynthesis; thiamine diphosphate biosynthesis. Functionally, catalyzes the ATP-dependent transfer of a sulfur to tRNA to produce 4-thiouridine in position 8 of tRNAs, which functions as a near-UV photosensor. Also catalyzes the transfer of sulfur to the sulfur carrier protein ThiS, forming ThiS-thiocarboxylate. This is a step in the synthesis of thiazole, in the thiamine biosynthesis pathway. The sulfur is donated as persulfide by IscS. The protein is Probable tRNA sulfurtransferase of Lactobacillus delbrueckii subsp. bulgaricus (strain ATCC BAA-365 / Lb-18).